Reading from the N-terminus, the 520-residue chain is General transcription factor 3C polypeptide 5 (520 aa).

N-acetylalanine is present on Ala2. A disordered region spans residues 466–520 (LFSNTGKADRGKEQLMFESGEEEEEEEEEEEEEEEDFKPSDGSENEMETEILDYV). 2 stretches are compositionally biased toward acidic residues: residues 484-501 (SGEE…EEED) and 508-520 (SENE…LDYV).

The protein belongs to the TFIIIC subunit 5 family. Part of the TFIIIC subcomplex TFIIIC2, consisting of six subunits, GTF3C1, GTF3C2, GTF3C3, GTF3C4, GTF3C5 and GTF3C6. Interacts with BRF1, GTF3C6 and TBP.

The protein localises to the nucleus. Functionally, involved in RNA polymerase III-mediated transcription. Integral, tightly associated component of the DNA-binding TFIIIC2 subcomplex that directly binds tRNA and virus-associated RNA promoters. This is General transcription factor 3C polypeptide 5 (Gtf3c5) from Mus musculus (Mouse).